The primary structure comprises 626 residues: Putative L-type lectin-domain containing receptor kinase V.8 (626 aa).

The N-terminal stretch at 1–21 is a signal peptide; that stretch reads MPSELKVLHIVLVLLYTLSSS. Residues 22–212 are legume-lectin like; sequence TYNSNGNWTL…SIGAFHYMLS (191 aa). Residues 22–245 are Extracellular-facing; sequence TYNSNGNWTL…PKKSSDRTKK (224 aa). N-linked (GlcNAc...) asparagine glycans are attached at residues Asn-28, Asn-59, Asn-112, and Asn-162. A helical membrane pass occupies residues 246 to 266; that stretch reads ILAVCLTLAVFAVFVASGICF. The Cytoplasmic segment spans residues 267-626; it reads VFYTRHKKVK…LTNSFLSHGR (360 aa). The region spanning 303–562 is the Protein kinase domain; that stretch reads FKEKQLLGKG…GLLCAHHTEL (260 aa). Residues 309 to 317 and Lys-332 contribute to the ATP site; that span reads LGKGGFGQV. Catalysis depends on Asp-429, which acts as the Proton acceptor.

In the C-terminal section; belongs to the protein kinase superfamily. Ser/Thr protein kinase family. The protein in the N-terminal section; belongs to the leguminous lectin family.

It is found in the cell membrane. It carries out the reaction L-seryl-[protein] + ATP = O-phospho-L-seryl-[protein] + ADP + H(+). The catalysed reaction is L-threonyl-[protein] + ATP = O-phospho-L-threonyl-[protein] + ADP + H(+). The polypeptide is Putative L-type lectin-domain containing receptor kinase V.8 (LECRK58) (Arabidopsis thaliana (Mouse-ear cress)).